A 483-amino-acid chain; its full sequence is Rhamnulokinase (483 aa).

An ATP-binding site is contributed by 11–15 (ASSGR). Residues G79 and 234–236 (HDT) contribute to the substrate site. The active-site Proton acceptor is the D235. T257 provides a ligand contact to ATP. Substrate is bound at residue N294. Q302 serves as a coordination point for ATP. A disulfide bond links C352 and C369. ATP is bound at residue G401.

The protein belongs to the rhamnulokinase family. Mg(2+) serves as cofactor.

It catalyses the reaction L-rhamnulose + ATP = L-rhamnulose 1-phosphate + ADP + H(+). Its pathway is carbohydrate degradation; L-rhamnose degradation; glycerone phosphate from L-rhamnose: step 2/3. Involved in the catabolism of L-rhamnose (6-deoxy-L-mannose). Catalyzes the transfer of the gamma-phosphate group from ATP to the 1-hydroxyl group of L-rhamnulose to yield L-rhamnulose 1-phosphate. This chain is Rhamnulokinase, found in Listeria monocytogenes serotype 4b (strain CLIP80459).